Consider the following 355-residue polypeptide: MSFDLPDIILRPASLLYKNIIRIRNRLYDQQIFHTWHSPLPIVSIGNISAGGTGKTPLVDWIVKYYLSLGCKPAIVSRGYGRNTKGVQLVSDGKTVLMKSNACGDETAMLAWNNRDAIVIVAEKRKDAVTFIIRRFAEAMPDVIILDDAFQHRQIARNLDIVVINEKEPYFRADMIPKGRLREPLINLARADLLVLSKITGGSTTAAISMDLEQTGKPVIKAGIAAGNLVCLSGMFNTAKESPVHAGIKALAFAGIGSPQSFIDTLEGQGIQIVSHRFFRDHESYTAKKIAALRLEADEKKLTLVTTEKDYFRMLGQPELQEILHTLSCCYLKIRPEFTEGEKLLKTMLNAVINR.

ATP is bound at residue 49–56 (SAGGTGKT).

It belongs to the LpxK family.

The catalysed reaction is a lipid A disaccharide + ATP = a lipid IVA + ADP + H(+). The protein operates within glycolipid biosynthesis; lipid IV(A) biosynthesis; lipid IV(A) from (3R)-3-hydroxytetradecanoyl-[acyl-carrier-protein] and UDP-N-acetyl-alpha-D-glucosamine: step 6/6. Its function is as follows. Transfers the gamma-phosphate of ATP to the 4'-position of a tetraacyldisaccharide 1-phosphate intermediate (termed DS-1-P) to form tetraacyldisaccharide 1,4'-bis-phosphate (lipid IVA). The protein is Tetraacyldisaccharide 4'-kinase of Chlorobium phaeobacteroides (strain DSM 266 / SMG 266 / 2430).